Consider the following 577-residue polypeptide: Adenine deaminase (577 aa).

The protein belongs to the metallo-dependent hydrolases superfamily. Adenine deaminase family. It depends on Mn(2+) as a cofactor.

The catalysed reaction is adenine + H2O + H(+) = hypoxanthine + NH4(+). This chain is Adenine deaminase (adeC), found in Bacillus subtilis (strain 168).